Here is a 113-residue protein sequence, read N- to C-terminus: Ig heavy chain V-III region E109 (113 aa).

The 113-residue stretch at 1-113 folds into the Ig-like domain; the sequence is EVKLEESGGG…YWGQGTLVTV (113 aa). Cysteine 22 and cysteine 98 are disulfide-bonded.

The protein is Ig heavy chain V-III region E109 of Mus musculus (Mouse).